Consider the following 506-residue polypeptide: Maturase K (506 aa).

The protein belongs to the intron maturase 2 family. MatK subfamily.

Its subcellular location is the plastid. It localises to the chloroplast. In terms of biological role, usually encoded in the trnK tRNA gene intron. Probably assists in splicing its own and other chloroplast group II introns. The chain is Maturase K from Rhododendron tomentosum (Marsh Labrador tea).